The following is a 504-amino-acid chain: ATP synthase subunit alpha (504 aa).

169–176 (GDRQTGKT) is an ATP binding site.

This sequence belongs to the ATPase alpha/beta chains family. As to quaternary structure, F-type ATPases have 2 components, CF(1) - the catalytic core - and CF(0) - the membrane proton channel. CF(1) has five subunits: alpha(3), beta(3), gamma(1), delta(1), epsilon(1). CF(0) has three main subunits: a(1), b(2) and c(9-12). The alpha and beta chains form an alternating ring which encloses part of the gamma chain. CF(1) is attached to CF(0) by a central stalk formed by the gamma and epsilon chains, while a peripheral stalk is formed by the delta and b chains.

The protein resides in the cell membrane. It carries out the reaction ATP + H2O + 4 H(+)(in) = ADP + phosphate + 5 H(+)(out). In terms of biological role, produces ATP from ADP in the presence of a proton gradient across the membrane. The alpha chain is a regulatory subunit. This Clostridium botulinum (strain Loch Maree / Type A3) protein is ATP synthase subunit alpha.